We begin with the raw amino-acid sequence, 438 residues long: Glutamyl-tRNA reductase (438 aa).

Substrate is bound by residues 49-52 (TCNR), S109, 114-116 (EGQ), and Q120. C50 functions as the Nucleophile in the catalytic mechanism. 198-203 (GAGRMS) contacts NADP(+).

Belongs to the glutamyl-tRNA reductase family. As to quaternary structure, homodimer.

It carries out the reaction (S)-4-amino-5-oxopentanoate + tRNA(Glu) + NADP(+) = L-glutamyl-tRNA(Glu) + NADPH + H(+). The protein operates within porphyrin-containing compound metabolism; protoporphyrin-IX biosynthesis; 5-aminolevulinate from L-glutamyl-tRNA(Glu): step 1/2. Its pathway is porphyrin-containing compound metabolism; chlorophyll biosynthesis. Catalyzes the NADPH-dependent reduction of glutamyl-tRNA(Glu) to glutamate 1-semialdehyde (GSA). The protein is Glutamyl-tRNA reductase of Synechococcus sp. (strain WH7803).